The following is a 415-amino-acid chain: Putative glutamate--cysteine ligase 2 (415 aa).

Belongs to the glutamate--cysteine ligase type 2 family. YbdK subfamily.

The catalysed reaction is L-cysteine + L-glutamate + ATP = gamma-L-glutamyl-L-cysteine + ADP + phosphate + H(+). ATP-dependent carboxylate-amine ligase which exhibits weak glutamate--cysteine ligase activity. The protein is Putative glutamate--cysteine ligase 2 of Bordetella petrii (strain ATCC BAA-461 / DSM 12804 / CCUG 43448).